The sequence spans 338 residues: Ketol-acid reductoisomerase (NADP(+)) (338 aa).

A KARI N-terminal Rossmann domain is found at 1 to 181 (MKVYYDKDAD…GGTRGGVIET (181 aa)). NADP(+)-binding positions include 24-27 (YGSQ), R47, and S52. Residue H107 is part of the active site. G133 is a binding site for NADP(+). In terms of domain architecture, KARI C-terminal knotted spans 182–327 (TFKEETETDL…SRLRDMMPWI (146 aa)). Mg(2+) is bound by residues D190, E194, E226, and E230. Substrate is bound at residue S251.

The protein belongs to the ketol-acid reductoisomerase family. The cofactor is Mg(2+).

The catalysed reaction is (2R)-2,3-dihydroxy-3-methylbutanoate + NADP(+) = (2S)-2-acetolactate + NADPH + H(+). The enzyme catalyses (2R,3R)-2,3-dihydroxy-3-methylpentanoate + NADP(+) = (S)-2-ethyl-2-hydroxy-3-oxobutanoate + NADPH + H(+). The protein operates within amino-acid biosynthesis; L-isoleucine biosynthesis; L-isoleucine from 2-oxobutanoate: step 2/4. Its pathway is amino-acid biosynthesis; L-valine biosynthesis; L-valine from pyruvate: step 2/4. Functionally, involved in the biosynthesis of branched-chain amino acids (BCAA). Catalyzes an alkyl-migration followed by a ketol-acid reduction of (S)-2-acetolactate (S2AL) to yield (R)-2,3-dihydroxy-isovalerate. In the isomerase reaction, S2AL is rearranged via a Mg-dependent methyl migration to produce 3-hydroxy-3-methyl-2-ketobutyrate (HMKB). In the reductase reaction, this 2-ketoacid undergoes a metal-dependent reduction by NADPH to yield (R)-2,3-dihydroxy-isovalerate. This chain is Ketol-acid reductoisomerase (NADP(+)), found in Nitrosomonas eutropha (strain DSM 101675 / C91 / Nm57).